The primary structure comprises 406 residues: Succinylornithine transaminase (406 aa).

At Lys252 the chain carries N6-(pyridoxal phosphate)lysine.

The protein belongs to the class-III pyridoxal-phosphate-dependent aminotransferase family. AstC subfamily. Requires pyridoxal 5'-phosphate as cofactor.

The enzyme catalyses N(2)-succinyl-L-ornithine + 2-oxoglutarate = N-succinyl-L-glutamate 5-semialdehyde + L-glutamate. It participates in amino-acid degradation; L-arginine degradation via AST pathway; L-glutamate and succinate from L-arginine: step 3/5. Catalyzes the transamination of N(2)-succinylornithine and alpha-ketoglutarate into N(2)-succinylglutamate semialdehyde and glutamate. Can also act as an acetylornithine aminotransferase. This is Succinylornithine transaminase from Escherichia coli O7:K1 (strain IAI39 / ExPEC).